Reading from the N-terminus, the 497-residue chain is Bifunctional protein GlmU (497 aa).

The interval 1–252 (MSQPSARPSA…VWEVEGANDR (252 aa)) is pyrophosphorylase. Residues 14–17 (LAAG), K28, Q86, 91–92 (GT), 115–117 (YGD), G154, E169, N192, and N250 contribute to the UDP-N-acetyl-alpha-D-glucosamine site. Residue D117 participates in Mg(2+) binding. Residue N250 participates in Mg(2+) binding. The segment at 253–273 (RQLSDLGRRLNERVLRHWMKE) is linker. The N-acetyltransferase stretch occupies residues 274 to 497 (GVTVVDPSST…AGAEGSGAQG (224 aa)). The UDP-N-acetyl-alpha-D-glucosamine site is built by R355 and K373. H385 serves as the catalytic Proton acceptor. Y388 and N399 together coordinate UDP-N-acetyl-alpha-D-glucosamine. Acetyl-CoA-binding positions include 408–409 (NY), S427, and A445. Positions 473–497 (PAKRPGTSSAEAARAAGAEGSGAQG) are disordered. Low complexity predominate over residues 480–490 (SSAEAARAAGA).

This sequence in the N-terminal section; belongs to the N-acetylglucosamine-1-phosphate uridyltransferase family. In the C-terminal section; belongs to the transferase hexapeptide repeat family. Homotrimer. It depends on Mg(2+) as a cofactor.

Its subcellular location is the cytoplasm. The enzyme catalyses alpha-D-glucosamine 1-phosphate + acetyl-CoA = N-acetyl-alpha-D-glucosamine 1-phosphate + CoA + H(+). It carries out the reaction N-acetyl-alpha-D-glucosamine 1-phosphate + UTP + H(+) = UDP-N-acetyl-alpha-D-glucosamine + diphosphate. It functions in the pathway nucleotide-sugar biosynthesis; UDP-N-acetyl-alpha-D-glucosamine biosynthesis; N-acetyl-alpha-D-glucosamine 1-phosphate from alpha-D-glucosamine 6-phosphate (route II): step 2/2. It participates in nucleotide-sugar biosynthesis; UDP-N-acetyl-alpha-D-glucosamine biosynthesis; UDP-N-acetyl-alpha-D-glucosamine from N-acetyl-alpha-D-glucosamine 1-phosphate: step 1/1. The protein operates within bacterial outer membrane biogenesis; LPS lipid A biosynthesis. Catalyzes the last two sequential reactions in the de novo biosynthetic pathway for UDP-N-acetylglucosamine (UDP-GlcNAc). The C-terminal domain catalyzes the transfer of acetyl group from acetyl coenzyme A to glucosamine-1-phosphate (GlcN-1-P) to produce N-acetylglucosamine-1-phosphate (GlcNAc-1-P), which is converted into UDP-GlcNAc by the transfer of uridine 5-monophosphate (from uridine 5-triphosphate), a reaction catalyzed by the N-terminal domain. The polypeptide is Bifunctional protein GlmU (Micrococcus luteus (strain ATCC 4698 / DSM 20030 / JCM 1464 / CCM 169 / CCUG 5858 / IAM 1056 / NBRC 3333 / NCIMB 9278 / NCTC 2665 / VKM Ac-2230) (Micrococcus lysodeikticus)).